Here is a 353-residue protein sequence, read N- to C-terminus: (S)-8-amino-7-oxononanoate synthase BioU (353 aa).

10 to 14 provides a ligand contact to NAD(+); it reads GTGGI. Residue Lys-147 is the Nucleophile of the active site. Position 147 is an allysine (Lys-147). Position 214–215 (214–215) interacts with NAD(+); sequence GT. Residue Glu-218 is the Proton acceptor of the active site. His-222 acts as the Proton donor and proton acceptor in catalysis.

The protein belongs to the BioU family. Monomer.

The catalysed reaction is (8S)-8-amino-7-oxononanoate + L-lysyl-[protein] + CO2 = (S)-2-amino-6-oxohexanoyl-[protein] + (7R,8S)-8-amino-7-(carboxyamino)nonanoate + 2 H(+). It carries out the reaction (8S)-8-amino-7-oxononanoate + L-lysyl-[protein] + NADPH + H(+) = N(6)-[(2S,3R)-2-amino-8-carboxyoctan-3-yl]-L-lysyl-[protein] + NADP(+) + H2O. The enzyme catalyses N(6)-[(2S,3R)-2-amino-8-carboxyoctan-3-yl]-L-lysyl-[protein] + CO2 + NADP(+) + H2O = (S)-2-amino-6-oxohexanoyl-[protein] + (7R,8S)-8-amino-7-(carboxyamino)nonanoate + NADPH + 3 H(+). It catalyses the reaction (8S)-8-amino-7-oxononanoate + L-lysyl-[protein] + NADH + H(+) = N(6)-[(2S,3R)-2-amino-8-carboxyoctan-3-yl]-L-lysyl-[protein] + NAD(+) + H2O. The catalysed reaction is N(6)-[(2S,3R)-2-amino-8-carboxyoctan-3-yl]-L-lysyl-[protein] + CO2 + NAD(+) + H2O = (S)-2-amino-6-oxohexanoyl-[protein] + (7R,8S)-8-amino-7-(carboxyamino)nonanoate + NADH + 3 H(+). Its pathway is cofactor biosynthesis; biotin biosynthesis. In terms of biological role, a 'suicide' enzyme that participates in biotin synthesis. Catalyzes the formation of (S)-8-amino-7-oxononanoate (DAN-carbamic acid) from (7R,8S)-8-amino-7-(carboxyamino)nonanoate (DAN), a function equivalent to the cannonical BioA reaction and the first half-reaction of BioD. The cellular requirement for biotin is thought be low enough that this single turnover enzyme supplies a sufficient amount of the cofactor. Overall it catalyzes three reactions: formation of a covalent linkage with 8-amino-7-oxononanoate to yield a BioU-DAN conjugate at the epsilon-amino group of Lys124 of BioU using NAD(P)H, carboxylation of the conjugate to form BioU-DAN-carbamic acid, and release of DAN-carbamic acid using NAD(P)+. Complements a bioA deletion in E.coli. In Haloferax mediterranei (strain ATCC 33500 / DSM 1411 / JCM 8866 / NBRC 14739 / NCIMB 2177 / R-4) (Halobacterium mediterranei), this protein is (S)-8-amino-7-oxononanoate synthase BioU.